A 207-amino-acid polypeptide reads, in one-letter code: Glycerol-3-phosphate acyltransferase (207 aa).

The next 6 membrane-spanning stretches (helical) occupy residues 1–21 (MIII…GKYF), 42–62 (ILGV…GTLA), 65–85 (IPII…FAII), 105–125 (AGVL…IFLL), 138–158 (ITVA…GFIL), and 159–179 (TDYD…IIIR).

It belongs to the PlsY family. As to quaternary structure, probably interacts with PlsX.

Its subcellular location is the cell membrane. The catalysed reaction is an acyl phosphate + sn-glycerol 3-phosphate = a 1-acyl-sn-glycero-3-phosphate + phosphate. The protein operates within lipid metabolism; phospholipid metabolism. Its function is as follows. Catalyzes the transfer of an acyl group from acyl-phosphate (acyl-PO(4)) to glycerol-3-phosphate (G3P) to form lysophosphatidic acid (LPA). This enzyme utilizes acyl-phosphate as fatty acyl donor, but not acyl-CoA or acyl-ACP. The chain is Glycerol-3-phosphate acyltransferase from Streptococcus agalactiae serotype Ia (strain ATCC 27591 / A909 / CDC SS700).